The sequence spans 476 residues: Adenosylhomocysteinase (476 aa).

The substrate site is built by threonine 67, aspartate 142, and glutamate 202. An NAD(+)-binding site is contributed by 203 to 205 (TTT). Residues lysine 232 and aspartate 236 each contribute to the substrate site. NAD(+)-binding positions include asparagine 237, 266 to 271 (GYGDVG), glutamate 289, asparagine 324, 345 to 347 (IGH), and asparagine 390.

It belongs to the adenosylhomocysteinase family. It depends on NAD(+) as a cofactor.

Its subcellular location is the cytoplasm. It carries out the reaction S-adenosyl-L-homocysteine + H2O = L-homocysteine + adenosine. The protein operates within amino-acid biosynthesis; L-homocysteine biosynthesis; L-homocysteine from S-adenosyl-L-homocysteine: step 1/1. In terms of biological role, may play a key role in the regulation of the intracellular concentration of adenosylhomocysteine. The chain is Adenosylhomocysteinase from Prochlorococcus marinus (strain SARG / CCMP1375 / SS120).